The following is a 161-amino-acid chain: Capsid protein (161 aa).

Alanine 2 is subject to N-acetylalanine; by host.

The protein belongs to the virgaviridae capsid protein family.

The protein resides in the virion. Its function is as follows. Capsid protein self-assembles to form rod-shaped virions about 18 nm in diameter with a central canal enclosing the viral genomic RNA. This chain is Capsid protein (CP), found in Cucumber green mottle mosaic virus (strain watermelon SH) (CGMMV).